The primary structure comprises 528 residues: Tyrosine--tRNA ligase, cytoplasmic (528 aa).

Residue Y39 coordinates L-tyrosine. The 'HIGH' region motif lies at 44–52 (TTGKPHVAY). L-tyrosine contacts are provided by Y166, Q170, D173, and Q188. Positions 222 to 226 (KMSSS) match the 'KMSKS' region motif. Positions 242-247 (KKKLKK) match the Nuclear localization signal motif. The segment at 332 to 362 (EMKKLSNDAYPDASKQKSVPKGSTKNSGTEE) is disordered. A tRNA-binding domain is found at 364–468 (DPSLLDLRVG…SGSAPGERIY (105 aa)).

Belongs to the class-I aminoacyl-tRNA synthetase family. Homodimer.

It is found in the cytoplasm. The protein localises to the nucleus. It carries out the reaction tRNA(Tyr) + L-tyrosine + ATP = L-tyrosyl-tRNA(Tyr) + AMP + diphosphate + H(+). Catalyzes the attachment of tyrosine to tRNA(Tyr) in a two-step reaction: tyrosine is first activated by ATP to form Tyr-AMP and then transferred to the acceptor end of tRNA(Tyr). This is Tyrosine--tRNA ligase, cytoplasmic (yars1) from Xenopus laevis (African clawed frog).